The following is a 318-amino-acid chain: MNQLEQLRQFTTVVADTGDFQLMKQYTPQDATTNPSLILKAVQKPEYRHLLEKAVQDHHGNGGVDAVMDEVLIAFGCEILAIVPGRVSTEVDARLSFDTEASVAKARHLIQLYEQRGIARERVLIKIASTWEGIRAAEILQRDGIRCNMTLLFSLVQAVACAEAGAQLISPFVGRIFDWYKKQAGEQWDAAANGGDNDPGVRSVRQIYDYYKKFGYPTEVMGASFRSTTQILSLAGCDLLTISPELLEQLAAGQGPVAHKLSVDQAQAANIARIAADEPAFRWQLNEDAMATEKLAEGIRLFAADAVKLEKLIGEIAK.

The active-site Schiff-base intermediate with substrate is the Lys126.

Belongs to the transaldolase family. Type 1 subfamily. As to quaternary structure, homodimer.

The protein localises to the cytoplasm. The catalysed reaction is D-sedoheptulose 7-phosphate + D-glyceraldehyde 3-phosphate = D-erythrose 4-phosphate + beta-D-fructose 6-phosphate. Its pathway is carbohydrate degradation; pentose phosphate pathway; D-glyceraldehyde 3-phosphate and beta-D-fructose 6-phosphate from D-ribose 5-phosphate and D-xylulose 5-phosphate (non-oxidative stage): step 2/3. In terms of biological role, transaldolase is important for the balance of metabolites in the pentose-phosphate pathway. The polypeptide is Transaldolase (Cupriavidus necator (strain ATCC 17699 / DSM 428 / KCTC 22496 / NCIMB 10442 / H16 / Stanier 337) (Ralstonia eutropha)).